The chain runs to 463 residues: Type IV secretion system protein PtlD homolog (463 aa).

Residues 1 to 24 (MAGLSRILLSCTLACLLAGQAAQA) form the signal peptide. A run of 5 helical transmembrane segments spans residues 118 to 138 (LQPLVYSMMTLLVLLTGYALL), 232 to 252 (WLLCAMIVATSAGGWLCLAAS), 253 to 273 (LLIVPGLIVTLLLSLGPLFLV), 294 to 314 (ALVFMALGTPAVGLLSDVLAG), and 333 to 353 (MLAATLCATATLMLLTLVPLA). Residues 376-410 (AHRQAAARQYAPRPAAAAAAAGPHQAGTYAASATP) show a composition bias toward low complexity. Positions 376-463 (AHRQAAARQY…RVLPRKPNLP (88 aa)) are disordered. Over residues 411–420 (APAPARPAPS) the composition is skewed to pro residues. Residues 441–455 (VRRDDRPAPAPDRRV) show a composition bias toward basic and acidic residues.

It localises to the cell membrane. The protein is Type IV secretion system protein PtlD homolog (ptlD) of Bordetella parapertussis (strain 12822 / ATCC BAA-587 / NCTC 13253).